Here is a 329-residue protein sequence, read N- to C-terminus: MQEMLEQLLTPRLVDIKTVNGFNSRVTLEPLERGFGHTLGNALRRILLSSMPGAAIVEAQIDGVLHEYSAIEGVREDVLEIMLNLKEVAIKLNETSEAELTLSKKGPAVVTAADIQLNHDTEIMNPDLVIAHLGEGAELSMKLKVEKGIGYRAAVQSSDSESANIGVLKLDASFSPVKTVSYEVQNARVEQRTDLDKLILNVVTDGTLDPEDAIKQAATVLHYQLIAFVDLKHKEIVVQEEEENEFDPIFLQPVDDLELTVRSANCLKAEQIYYIGDLVQRAESSLLKTPNLGKKSLQEIKDVLAQRGLGLGTKLENWPPSSLVSKESA.

An alpha N-terminal domain (alpha-NTD) region spans residues 1–232 (MQEMLEQLLT…YQLIAFVDLK (232 aa)). Residues 246–329 (FDPIFLQPVD…PSSLVSKESA (84 aa)) form an alpha C-terminal domain (alpha-CTD) region.

The protein belongs to the RNA polymerase alpha chain family. Homodimer. The RNAP catalytic core consists of 2 alpha, 1 beta, 1 beta' and 1 omega subunit. When a sigma factor is associated with the core the holoenzyme is formed, which can initiate transcription.

The catalysed reaction is RNA(n) + a ribonucleoside 5'-triphosphate = RNA(n+1) + diphosphate. Functionally, DNA-dependent RNA polymerase catalyzes the transcription of DNA into RNA using the four ribonucleoside triphosphates as substrates. The sequence is that of DNA-directed RNA polymerase subunit alpha from Hydrogenovibrio crunogenus (strain DSM 25203 / XCL-2) (Thiomicrospira crunogena).